A 456-amino-acid polypeptide reads, in one-letter code: tRNA-2-methylthio-N(6)-dimethylallyladenosine synthase (456 aa).

Residues K9–S126 enclose the MTTase N-terminal domain. C18, C55, C89, C163, C167, and C170 together coordinate [4Fe-4S] cluster. In terms of domain architecture, Radical SAM core spans D149–A381. Residues R384 to A448 enclose the TRAM domain.

The protein belongs to the methylthiotransferase family. MiaB subfamily. Monomer. It depends on [4Fe-4S] cluster as a cofactor.

It is found in the cytoplasm. It catalyses the reaction N(6)-dimethylallyladenosine(37) in tRNA + (sulfur carrier)-SH + AH2 + 2 S-adenosyl-L-methionine = 2-methylsulfanyl-N(6)-dimethylallyladenosine(37) in tRNA + (sulfur carrier)-H + 5'-deoxyadenosine + L-methionine + A + S-adenosyl-L-homocysteine + 2 H(+). Catalyzes the methylthiolation of N6-(dimethylallyl)adenosine (i(6)A), leading to the formation of 2-methylthio-N6-(dimethylallyl)adenosine (ms(2)i(6)A) at position 37 in tRNAs that read codons beginning with uridine. This is tRNA-2-methylthio-N(6)-dimethylallyladenosine synthase from Cellvibrio japonicus (strain Ueda107) (Pseudomonas fluorescens subsp. cellulosa).